The following is a 113-amino-acid chain: Large ribosomal subunit protein uL22 (113 aa).

The protein belongs to the universal ribosomal protein uL22 family. In terms of assembly, part of the 50S ribosomal subunit.

Functionally, this protein binds specifically to 23S rRNA; its binding is stimulated by other ribosomal proteins, e.g. L4, L17, and L20. It is important during the early stages of 50S assembly. It makes multiple contacts with different domains of the 23S rRNA in the assembled 50S subunit and ribosome. Its function is as follows. The globular domain of the protein is located near the polypeptide exit tunnel on the outside of the subunit, while an extended beta-hairpin is found that lines the wall of the exit tunnel in the center of the 70S ribosome. The protein is Large ribosomal subunit protein uL22 of Bacillus mycoides (strain KBAB4) (Bacillus weihenstephanensis).